The primary structure comprises 331 residues: Probable leucine carboxyl methyltransferase 1 (331 aa).

Residues arginine 82, glycine 107, aspartate 131, 179–180 (DL), and glutamate 206 contribute to the S-adenosyl-L-methionine site.

Belongs to the methyltransferase superfamily. LCMT family.

It catalyses the reaction [phosphatase 2A protein]-C-terminal L-leucine + S-adenosyl-L-methionine = [phosphatase 2A protein]-C-terminal L-leucine methyl ester + S-adenosyl-L-homocysteine. Methylates the carboxyl group of the C-terminal leucine residue of protein phosphatase 2A catalytic subunits to form alpha-leucine ester residues. This Caenorhabditis briggsae protein is Probable leucine carboxyl methyltransferase 1.